The primary structure comprises 452 residues: Cytochrome b-c1 complex subunit 2, mitochondrial (452 aa).

The N-terminal 14 residues, 1 to 14 (MKLLSRAGSFSRFY), are a transit peptide targeting the mitochondrion. An N6-acetyllysine mark is found at Lys65, Lys198, and Lys249. At Ser367 the chain carries Phosphoserine.

It belongs to the peptidase M16 family. UQCRC2/QCR2 subfamily. As to quaternary structure, component of the ubiquinol-cytochrome c oxidoreductase (cytochrome b-c1 complex, complex III, CIII), a multisubunit enzyme composed of 11 subunits. The complex is composed of 3 respiratory subunits cytochrome b, cytochrome c1 and Rieske protein UQCRFS1, 2 core protein subunits UQCRC1/QCR1 and UQCRC2/QCR2, and 6 low-molecular weight protein subunits UQCRH/QCR6, UQCRB/QCR7, UQCRQ/QCR8, UQCR10/QCR9, UQCR11/QCR10 and subunit 9, the cleavage product of Rieske protein UQCRFS1. The complex exists as an obligatory dimer and forms supercomplexes (SCs) in the inner mitochondrial membrane with NADH-ubiquinone oxidoreductase (complex I, CI) and cytochrome c oxidase (complex IV, CIV), resulting in different assemblies (supercomplex SCI(1)III(2)IV(1) and megacomplex MCI(2)III(2)IV(2)). Interacts with RAB5IF. Interacts with STMP1. As to expression, expressed in the head region and flagellum of epididymal sperm.

It localises to the mitochondrion inner membrane. Functionally, component of the ubiquinol-cytochrome c oxidoreductase, a multisubunit transmembrane complex that is part of the mitochondrial electron transport chain which drives oxidative phosphorylation. The respiratory chain contains 3 multisubunit complexes succinate dehydrogenase (complex II, CII), ubiquinol-cytochrome c oxidoreductase (cytochrome b-c1 complex, complex III, CIII) and cytochrome c oxidase (complex IV, CIV), that cooperate to transfer electrons derived from NADH and succinate to molecular oxygen, creating an electrochemical gradient over the inner membrane that drives transmembrane transport and the ATP synthase. The cytochrome b-c1 complex catalyzes electron transfer from ubiquinol to cytochrome c, linking this redox reaction to translocation of protons across the mitochondrial inner membrane, with protons being carried across the membrane as hydrogens on the quinol. In the process called Q cycle, 2 protons are consumed from the matrix, 4 protons are released into the intermembrane space and 2 electrons are passed to cytochrome c. The 2 core subunits UQCRC1/QCR1 and UQCRC2/QCR2 are homologous to the 2 mitochondrial-processing peptidase (MPP) subunits beta-MPP and alpha-MPP respectively, and they seem to have preserved their MPP processing properties. May be involved in the in situ processing of UQCRFS1 into the mature Rieske protein and its mitochondrial targeting sequence (MTS)/subunit 9 when incorporated into complex III. The protein is Cytochrome b-c1 complex subunit 2, mitochondrial (Uqcrc2) of Rattus norvegicus (Rat).